A 262-amino-acid polypeptide reads, in one-letter code: Acyl-[acyl-carrier-protein]--UDP-N-acetylglucosamine O-acyltransferase (262 aa).

This sequence belongs to the transferase hexapeptide repeat family. LpxA subfamily. Homotrimer.

Its subcellular location is the cytoplasm. The catalysed reaction is a (3R)-hydroxyacyl-[ACP] + UDP-N-acetyl-alpha-D-glucosamine = a UDP-3-O-[(3R)-3-hydroxyacyl]-N-acetyl-alpha-D-glucosamine + holo-[ACP]. The protein operates within glycolipid biosynthesis; lipid IV(A) biosynthesis; lipid IV(A) from (3R)-3-hydroxytetradecanoyl-[acyl-carrier-protein] and UDP-N-acetyl-alpha-D-glucosamine: step 1/6. Involved in the biosynthesis of lipid A, a phosphorylated glycolipid that anchors the lipopolysaccharide to the outer membrane of the cell. The sequence is that of Acyl-[acyl-carrier-protein]--UDP-N-acetylglucosamine O-acyltransferase from Paraburkholderia phymatum (strain DSM 17167 / CIP 108236 / LMG 21445 / STM815) (Burkholderia phymatum).